Here is a 1070-residue protein sequence, read N- to C-terminus: uncharacterized protein (1070 aa).

Residues 477–523 (LIDTNQLLLRQLQQIVKLGIFNEKKIKEELKANKFNEQVALQILESE) form the UBA domain.

This is an uncharacterized protein from Sulfolobus islandicus rod-shaped virus 1 (SIRV-1).